The primary structure comprises 870 residues: DNA mismatch repair protein MutS (870 aa).

617–624 provides a ligand contact to ATP; sequence GPNMAGKS.

Belongs to the DNA mismatch repair MutS family.

In terms of biological role, this protein is involved in the repair of mismatches in DNA. It is possible that it carries out the mismatch recognition step. This protein has a weak ATPase activity. This is DNA mismatch repair protein MutS from Phocaeicola vulgatus (strain ATCC 8482 / DSM 1447 / JCM 5826 / CCUG 4940 / NBRC 14291 / NCTC 11154) (Bacteroides vulgatus).